A 520-amino-acid polypeptide reads, in one-letter code: Amino-acid permease BAT1 homolog (520 aa).

Transmembrane regions (helical) follow at residues 39-59, 74-94, 118-138, 168-188, 193-213, 236-256, 278-298, 334-354, 387-407, 410-430, 454-474, and 487-507; these read VLSN…ITTL, FGWF…AEIC, FASW…TTSV, VVIA…SLPI, FFGQ…MIAV, AGIH…QYTL, IGII…ILGI, SGIG…FCGM, VPIN…LPSL, LVAF…AYAL, GVAV…LFSL, and YTPV…LLSA.

This sequence belongs to the amino acid-polyamine-organocation (APC) superfamily. Amino acid/choline transporter (ACT) (TC 2.A.3.4) family.

Its subcellular location is the membrane. Functionally, may be involved in the transport of amino acids. The chain is Amino-acid permease BAT1 homolog (BAT1) from Oryza sativa subsp. japonica (Rice).